Reading from the N-terminus, the 603-residue chain is Serine/threonine-protein kinase PLK1 (603 aa).

A Glycyl lysine isopeptide (Lys-Gly) (interchain with G-Cter in ubiquitin) cross-link involves residue lysine 19. The Protein kinase domain occupies 53–305; that stretch reads YVRGRFLGKG…IHELLNDEFF (253 aa). Residues 59–67 and lysine 82 contribute to the ATP site; that span reads LGKGGFAKC. Serine 103 is subject to Phosphoserine. Glutamate 131 is a binding site for ATP. Residue serine 137 is modified to Phosphoserine. Catalysis depends on aspartate 176, which acts as the Proton acceptor. ATP contacts are provided by residues 178 to 181 and aspartate 194; that span reads KLGN. The tract at residues 194–221 is activation loop; sequence DFGLATKVEYEGERKKTLCGTPNYIAPE. The residue at position 210 (threonine 210) is a Phosphothreonine; by AURKA. Threonine 214 is subject to Phosphothreonine. A phosphoserine; by autocatalysis mark is found at serine 269 and serine 335. A D-box that targets the protein for proteasomal degradation in anaphase motif is present at residues 337 to 340; it reads RKPL. Lysine 338 participates in a covalent cross-link: Glycyl lysine isopeptide (Lys-Gly) (interchain with G-Cter in SUMO2). Phosphoserine is present on residues serine 375 and serine 450. Residues 410–488 form the POLO box 1 domain; sequence WVSKWVDYSD…LNYFRNYMSE (79 aa). Lysine 492 is covalently cross-linked (Glycyl lysine isopeptide (Lys-Gly) (interchain with G-Cter in ubiquitin)). A linker region spans residues 493 to 507; sequence AGANITPREGDELAR. Threonine 498 is subject to Phosphothreonine. A POLO box 2 domain is found at 510-592; sequence YLRTWFRTRS…ARTMVDKLLS (83 aa). The important for interaction with phosphorylated proteins stretch occupies residues 538-540; sequence HTK.

This sequence belongs to the protein kinase superfamily. Ser/Thr protein kinase family. CDC5/Polo subfamily. As to quaternary structure, interacts with CEP170 and EVI5. Interacts and phosphorylates ERCC6L. Interacts with FAM29A. Interacts with SLX4/BTBD12 and TTDN1. Interacts with BUB1B. Interacts (via POLO-box domain) with the phosphorylated form of BUB1, CENPU and CDC25C. Interacts with isoform 3 of SGO1. Interacts with BORA, KIF2A and AURKA. Interacts with TOPORS and CYLD. Interacts with ECT2; the interaction is stimulated upon phosphorylation of ECT2 on 'Thr-444'. Interacts with PRC1. Interacts with KIF20A/MKLP2 (when phosphorylated), leading to the recruitment at the central spindle. Interacts (via POLO box domains) with PPP1R12A/MYPT1 (when previously phosphorylated by CDK1). Part of an astrin (SPAG5)-kinastrin (SKAP) complex containing KNSTRN, SPAG5, PLK1, DYNLL1 and SGO2A. Interacts with BIRC6/bruce. Interacts with CDK1-phosphorylated DCTN6 during mitotic prometaphase; the interaction facilitates recruitment to kinetochores. Interacts with CDK1-phosphorylated FRY; this interaction occurs in mitotic cells, but not in interphase cells. FRY interaction facilitates AURKA-mediated PLK1 phosphorylation. Interacts with CEP68; the interaction phosphorylates CEP68. Interacts (via POLO-box domain) with DCTN1. Interacts with CEP20 in later G1, S, G2 and M phases of the cell cycle; this interaction recruits PLK1 to centrosomes, a step required for S phase progression. Interacts with HSF1; this interaction increases upon heat shock but does not modulate neither HSF1 homotrimerization nor DNA-binding activities. Interacts with HNRNPU; this interaction induces phosphorylation of HNRNPU in mitosis. Interacts (via its N-terminus) with RIOK2. Interacts with KLHL22. Interacts (via POLO box domains) with NEDD9/HEF1 (via C-terminus). Interacts (via RVxF motif) with FIRRM; regulates PLK1 kinase activity. Interacts with SKA3; the interaction promotes the stability of PLK1. Interacts with the MTMR3:MTMR4 heterooligomer; brings CEP55 and PLK1 together during early mitosis, regulating the phosphorylation of CEP55 by PLK1 and its recruitment to the midbody where it can mediate cell abscission. Post-translationally, catalytic activity is enhanced by phosphorylation of Thr-210. Phosphorylation at Thr-210 is first detected on centrosomes in the G2 phase of the cell cycle, peaks in prometaphase and gradually disappears from centrosomes during anaphase. Dephosphorylation at Thr-210 at centrosomes is probably mediated by protein phosphatase 1C (PP1C), via interaction with PPP1R12A/MYPT1. Autophosphorylation and phosphorylation of Ser-137 may not be significant for the activation of PLK1 during mitosis, but may enhance catalytic activity during recovery after DNA damage checkpoint. Phosphorylated in vitro by STK10. In terms of processing, ubiquitinated by the anaphase promoting complex/cyclosome (APC/C) in anaphase and following DNA damage, leading to its degradation by the proteasome. Ubiquitination is mediated via its interaction with FZR1/CDH1. Ubiquitination and subsequent degradation prevents entry into mitosis and is essential to maintain an efficient G2 DNA damage checkpoint. Monoubiquitination at Lys-492 by the BCR(KLHL22) ubiquitin ligase complex does not lead to degradation: it promotes PLK1 dissociation from phosphoreceptor proteins and subsequent removal from kinetochores, allowing silencing of the spindle assembly checkpoint (SAC) and chromosome segregation. In terms of tissue distribution, newborn and adult spleen, fetal and newborn kidney, liver, brain, thymus and adult bone marrow, thymus, ovary and testes.

It is found in the nucleus. Its subcellular location is the chromosome. It localises to the centromere. The protein resides in the kinetochore. The protein localises to the cytoplasm. It is found in the cytoskeleton. Its subcellular location is the microtubule organizing center. It localises to the centrosome. The protein resides in the spindle. The protein localises to the midbody. The enzyme catalyses L-seryl-[protein] + ATP = O-phospho-L-seryl-[protein] + ADP + H(+). It carries out the reaction L-threonyl-[protein] + ATP = O-phospho-L-threonyl-[protein] + ADP + H(+). Its activity is regulated as follows. Activated by phosphorylation of Thr-210 by AURKA; phosphorylation by AURKA is enhanced by BORA. Once activated, activity is stimulated by binding target proteins. Binding of target proteins has no effect on the non-activated kinase. Several inhibitors targeting PLKs are currently in development and are under investigation in a growing number of clinical trials, such as BI 2536, an ATP-competitive PLK1 inhibitor or BI 6727, a dihydropteridinone that specifically inhibits the catalytic activity of PLK1. In terms of biological role, serine/threonine-protein kinase that performs several important functions throughout M phase of the cell cycle, including the regulation of centrosome maturation and spindle assembly, the removal of cohesins from chromosome arms, the inactivation of anaphase-promoting complex/cyclosome (APC/C) inhibitors, and the regulation of mitotic exit and cytokinesis. Polo-like kinase proteins act by binding and phosphorylating proteins that are already phosphorylated on a specific motif recognized by the POLO box domains. Phosphorylates BORA, BUB1B/BUBR1, CCNB1, CDC25C, CEP55, ECT2, ERCC6L, FBXO5/EMI1, FOXM1, KIF20A/MKLP2, CENPU, NEDD1, NINL, NPM1, NUDC, PKMYT1/MYT1, KIZ, MRE11, PPP1R12A/MYPT1, POLQ, PRC1, RACGAP1/CYK4, RAD51, RHNO1, SGO1, STAG2/SA2, TEX14, TOPORS, p73/TP73, TPT1, WEE1 and HNRNPU. Plays a key role in centrosome functions and the assembly of bipolar spindles by phosphorylating KIZ, NEDD1 and NINL. NEDD1 phosphorylation promotes subsequent targeting of the gamma-tubulin ring complex (gTuRC) to the centrosome, an important step for spindle formation. Phosphorylation of NINL component of the centrosome leads to NINL dissociation from other centrosomal proteins. Involved in mitosis exit and cytokinesis by phosphorylating CEP55, ECT2, KIF20A/MKLP2, CENPU, PRC1 and RACGAP1. Recruited at the central spindle by phosphorylating and docking PRC1 and KIF20A/MKLP2; creates its own docking sites on PRC1 and KIF20A/MKLP2 by mediating phosphorylation of sites subsequently recognized by the POLO box domains. Phosphorylates RACGAP1, thereby creating a docking site for the Rho GTP exchange factor ECT2 that is essential for the cleavage furrow formation. Promotes the central spindle recruitment of ECT2. Plays a central role in G2/M transition of mitotic cell cycle by phosphorylating CCNB1, CDC25C, FOXM1, CENPU, PKMYT1/MYT1, PPP1R12A/MYPT1 and WEE1. Part of a regulatory circuit that promotes the activation of CDK1 by phosphorylating the positive regulator CDC25C and inhibiting the negative regulators WEE1 and PKMYT1/MYT1. Also acts by mediating phosphorylation of cyclin-B1 (CCNB1) on centrosomes in prophase. Phosphorylates FOXM1, a key mitotic transcription regulator, leading to enhance FOXM1 transcriptional activity. Involved in kinetochore functions and sister chromatid cohesion by phosphorylating BUB1B/BUBR1, FBXO5/EMI1 and STAG2/SA2. PLK1 is high on non-attached kinetochores suggesting a role of PLK1 in kinetochore attachment or in spindle assembly checkpoint (SAC) regulation. Required for kinetochore localization of BUB1B. Regulates the dissociation of cohesin from chromosomes by phosphorylating cohesin subunits such as STAG2/SA2. Phosphorylates SGO1: required for spindle pole localization of isoform 3 of SGO1 and plays a role in regulating its centriole cohesion function. Mediates phosphorylation of FBXO5/EMI1, a negative regulator of the APC/C complex during prophase, leading to FBXO5/EMI1 ubiquitination and degradation by the proteasome. Acts as a negative regulator of p53 family members: phosphorylates TOPORS, leading to inhibit the sumoylation of p53/TP53 and simultaneously enhance the ubiquitination and subsequent degradation of p53/TP53. Phosphorylates the transactivation domain of the transcription factor p73/TP73, leading to inhibit p73/TP73-mediated transcriptional activation and pro-apoptotic functions. Phosphorylates BORA, and thereby promotes the degradation of BORA. Contributes to the regulation of AURKA function. Also required for recovery after DNA damage checkpoint and entry into mitosis. Phosphorylates MISP, leading to stabilization of cortical and astral microtubule attachments required for proper spindle positioning. Together with MEIKIN, acts as a regulator of kinetochore function during meiosis I: required both for mono-orientation of kinetochores on sister chromosomes and protection of centromeric cohesin from separase-mediated cleavage. Phosphorylates CEP68 and is required for its degradation. Regulates nuclear envelope breakdown during prophase by phosphorylating DCTN1 resulting in its localization in the nuclear envelope. Phosphorylates the heat shock transcription factor HSF1, promoting HSF1 nuclear translocation upon heat shock. Phosphorylates HSF1 also in the early mitotic period; this phosphorylation regulates HSF1 localization to the spindle pole, the recruitment of the SCF(BTRC) ubiquitin ligase complex induicing HSF1 degradation, and hence mitotic progression. Regulates mitotic progression by phosphorylating RIOK2. Through the phosphorylation of DZIP1 regulates the localization during mitosis of the BBSome, a ciliary protein complex involved in cilium biogenesis. Regulates DNA repair during mitosis by mediating phosphorylation of POLQ and RHNO1, thereby promoting POLQ recruitment to DNA damage sites. Phosphorylates ATXN10 which may play a role in the regulation of cytokinesis and may stimulate the proteasome-mediated degradation of ATXN10. The polypeptide is Serine/threonine-protein kinase PLK1 (Plk1) (Mus musculus (Mouse)).